Consider the following 86-residue polypeptide: Mu-theraphotoxin-Cg2a 2 (86 aa).

The signal sequence occupies residues 1–21 (MKVSVVITLAVLGVMFVWASA). Positions 22–50 (AELEERGSDQRDSPAWIKSMERIFQSEER) are excised as a propeptide. Cystine bridges form between Cys-52/Cys-66, Cys-59/Cys-71, and Cys-65/Cys-78. Phenylalanine amide is present on Phe-84.

Belongs to the neurotoxin 10 (Hwtx-1) family. 37 (Jztx-31) subfamily. In terms of tissue distribution, expressed by the venom gland.

The protein resides in the secreted. Its function is as follows. Inhibits both peak current and fast inactivation of voltage-gated sodium channels (Nav) channels. Inhibits the inactivation of Nav on DRG neurons (EC(50)=1.77 uM) and peak current of cardiac myocytes (IC(50)=0.90 uM). The polypeptide is Mu-theraphotoxin-Cg2a 2 (Chilobrachys guangxiensis (Chinese earth tiger tarantula)).